A 539-amino-acid chain; its full sequence is Trigger factor (539 aa).

The 90-residue stretch at Gly163–Pro252 folds into the PPIase FKBP-type domain. Composition is skewed to low complexity over residues Ser434 to Pro447 and Ala475 to Pro484. Residues Ser434–Glu539 are disordered. Positions Thr509 to Val528 are enriched in polar residues.

It belongs to the FKBP-type PPIase family. Tig subfamily.

It localises to the cytoplasm. The catalysed reaction is [protein]-peptidylproline (omega=180) = [protein]-peptidylproline (omega=0). Functionally, involved in protein export. Acts as a chaperone by maintaining the newly synthesized protein in an open conformation. Functions as a peptidyl-prolyl cis-trans isomerase. This chain is Trigger factor, found in Roseiflexus sp. (strain RS-1).